The sequence spans 154 residues: Host transcription reprogramming factor 5 (154 aa).

An N-terminal signal peptide occupies residues 1 to 19 (MQILRIAQLMALLATCASA). The tract at residues 24-85 (TGSRVYSRDV…KRIKAEQNAR (62 aa)) is disordered. The span at 35 to 50 (QTQGGFSGSPTTNSPD) shows a compositional bias: polar residues. Over residues 69–85 (ETEKERKKRIKAEQNAR) the composition is skewed to basic and acidic residues. The C2H2-type; degenerate zinc finger occupies 96-121 (YQCPYCSDPTVFSHSDALGRHIYTIH).

The protein localises to the secreted. It is found in the host nucleus. Probable secreted effector that translocates into the nuclei of host cells to reprogram the expression of targeted genes by binding on effector binding elements in rice. The protein is Host transcription reprogramming factor 5 of Pyricularia oryzae (strain 70-15 / ATCC MYA-4617 / FGSC 8958) (Rice blast fungus).